We begin with the raw amino-acid sequence, 337 residues long: MVVKVGINGFGRIGRLVIRNALEAQGVEVVAVNDPFIPLDYMVYMFKFDSVHGRYKGTVEAKDGKLIIAGKPIAVFGERDPASIPWGASGADYVVESTGVFTTIDKASAHLKGGAKKVIISAPSADAPMYVCGVNLDAYDPRRPSISNASCTTNCLAPLAKVIHDKFGIVEGLMSTIHATTATQKTVDGPSNKDWRGGRSVNNNIIPSSTGAAKAVGKVIPSLNGKLTGLSFRVPTLDVSVVDLVVRLEKEATYDEIKAAVKEAVAGPLKGILDYTEDALVSTDFTGNTHSSIFDASAGIALNKNFVKLIAWYDNEWGYSRRVVDLITFVAQKDGNA.

NAD(+)-binding positions include 12 to 13, Asp34, and Arg79; that span reads RI. D-glyceraldehyde 3-phosphate is bound by residues 150–152, Thr181, 210–211, and Arg233; these read SCT and TG. The Nucleophile role is filled by Cys151. Asn315 contacts NAD(+).

It belongs to the glyceraldehyde-3-phosphate dehydrogenase family. As to quaternary structure, homotetramer.

The protein localises to the cytoplasm. The catalysed reaction is D-glyceraldehyde 3-phosphate + phosphate + NAD(+) = (2R)-3-phospho-glyceroyl phosphate + NADH + H(+). It functions in the pathway carbohydrate degradation; glycolysis; pyruvate from D-glyceraldehyde 3-phosphate: step 1/5. The chain is Glyceraldehyde-3-phosphate dehydrogenase (GPD) from Omphalotus olearius (Jack o'lantern).